We begin with the raw amino-acid sequence, 308 residues long: tRNA dimethylallyltransferase (308 aa).

10-17 (GPTASGKT) contributes to the ATP binding site. 12–17 (TASGKT) is a binding site for substrate. 2 interaction with substrate tRNA regions span residues 35–38 (DSSL) and 159–163 (QRIFR).

It belongs to the IPP transferase family. Monomer. It depends on Mg(2+) as a cofactor.

It carries out the reaction adenosine(37) in tRNA + dimethylallyl diphosphate = N(6)-dimethylallyladenosine(37) in tRNA + diphosphate. Functionally, catalyzes the transfer of a dimethylallyl group onto the adenine at position 37 in tRNAs that read codons beginning with uridine, leading to the formation of N6-(dimethylallyl)adenosine (i(6)A). The chain is tRNA dimethylallyltransferase from Francisella tularensis subsp. tularensis (strain FSC 198).